Reading from the N-terminus, the 56-residue chain is MSGSGAMLLGLLILVAMATSLDTREICWHQSECDDPNEWCCIMGTSYGSCQPVCRP.

An N-terminal signal peptide occupies residues 1-23 (MSGSGAMLLGLLILVAMATSLDT). Disulfide bonds link Cys27-Cys41, Cys33-Cys50, and Cys40-Cys54.

In terms of tissue distribution, expressed by the venom duct.

It is found in the secreted. Probable neurotoxin. The polypeptide is Conotoxin Cal6.41c (Californiconus californicus (California cone)).